Consider the following 289-residue polypeptide: Rhodopsin (289 aa).

At 1–7 the chain is on the extracellular side; it reads YLVSPAG. Residues 8 to 32 form a helical membrane-spanning segment; sequence YAALGAYMFLLILVGFPVNFLTLYV. Residues 33–44 lie on the Cytoplasmic side of the membrane; the sequence is TLEHKKLRTPLN. The helical transmembrane segment at 45-67 threads the bilayer; it reads YILLNLAVADLFMVLGGFTTTMY. At 68–81 the chain is on the extracellular side; that stretch reads TSMHGYFVLGRLGC. C81 and C158 are disulfide-bonded. Residues 82 to 104 traverse the membrane as a helical segment; that stretch reads NLEGFFVTLGGEIALWSLVVLAI. Residues 105-107 carry the 'Ionic lock' involved in activated form stabilization motif; that stretch reads ERW. The Cytoplasmic portion of the chain corresponds to 105–123; that stretch reads ERWIGVFKSIRNFRFTEDH. The chain crosses the membrane as a helical span at residues 124-144; it reads AIMGLGFSWVMAATCAVPPLV. The Extracellular portion of the chain corresponds to 145–173; the sequence is GWLRYIPEGMQCSCGVDYYTRAEGFNNES. An N-linked (GlcNAc...) asparagine glycan is attached at N171. Residues 174 to 195 traverse the membrane as a helical segment; that stretch reads FVIYMFIVHFLIPLIVIFFCYG. The Cytoplasmic segment spans residues 196–223; the sequence is RLLCAVKEAAAAQQESETTQRAEKEVSR. Residues 224-245 form a helical membrane-spanning segment; it reads MVVIMVIGYLVCWLPYASVAWW. The Extracellular portion of the chain corresponds to 246 to 257; sequence IFCNQGSEFGPI. The chain crosses the membrane as a helical span at residues 258–279; the sequence is FMTLPAFFAKSPAIYNPLIYIC. N6-(retinylidene)lysine is present on K267. The Cytoplasmic portion of the chain corresponds to 280–289; it reads MNKQFPHCMI.

Belongs to the G-protein coupled receptor 1 family. Opsin subfamily. Phosphorylated on some or all of the serine and threonine residues present in the C-terminal region. Post-translationally, contains one covalently linked retinal chromophore.

Its subcellular location is the membrane. The protein localises to the cell projection. It is found in the cilium. It localises to the photoreceptor outer segment. Functionally, photoreceptor required for image-forming vision at low light intensity. While most salt water fish species use retinal as chromophore, most freshwater fish use 3-dehydroretinal, or a mixture of retinal and 3-dehydroretinal. Light-induced isomerization of 11-cis to all-trans retinal triggers a conformational change that activates signaling via G-proteins. Subsequent receptor phosphorylation mediates displacement of the bound G-protein alpha subunit by arrestin and terminates signaling. This chain is Rhodopsin (rho), found in Leocottus kesslerii (Kessler's sculpin).